The sequence spans 130 residues: Protein YchQ (130 aa).

At 1–9 (MTSFSTLLS) the chain is on the periplasmic side. Residues 10–28 (VHLISIALSVGLLTLRFWL) form a helical membrane-spanning segment. Residues 29 to 39 (RYQKHPQAFAR) lie on the Cytoplasmic side of the membrane. The chain crosses the membrane as a helical span at residues 40-59 (WTRIVPPVVDTLLLLSGIAL). The Periplasmic segment spans residues 60–73 (MAKAHILPFSGQAQ). The helical transmembrane segment at 74 to 93 (WLTEKLFGVIIYIVLGFIAL) threads the bilayer. The Cytoplasmic segment spans residues 94–104 (DYRRMHSQQAR). The helical transmembrane segment at 105 to 124 (IIAFPLALVVLYIIIKLATT) threads the bilayer. Topologically, residues 125 to 130 (KVPLLG) are periplasmic.

This sequence belongs to the SirB2 family.

The protein localises to the cell inner membrane. The chain is Protein YchQ (ychQ) from Escherichia coli (strain K12).